Here is a 279-residue protein sequence, read N- to C-terminus: Energy-coupling factor transporter ATP-binding protein EcfA1 (279 aa).

An ABC transporter domain is found at 6–240 (VRLEHVFYKY…ADAMREIGLG (235 aa)). 40 to 47 (GHNGSGKS) is a binding site for ATP.

Belongs to the ABC transporter superfamily. Energy-coupling factor EcfA family. In terms of assembly, forms a stable energy-coupling factor (ECF) transporter complex composed of 2 membrane-embedded substrate-binding proteins (S component), 2 ATP-binding proteins (A component) and 2 transmembrane proteins (T component).

Its subcellular location is the cell membrane. Its function is as follows. ATP-binding (A) component of a common energy-coupling factor (ECF) ABC-transporter complex. Unlike classic ABC transporters this ECF transporter provides the energy necessary to transport a number of different substrates. The protein is Energy-coupling factor transporter ATP-binding protein EcfA1 of Listeria monocytogenes serotype 4b (strain F2365).